The following is a 109-amino-acid chain: Ferredoxin CarAc (109 aa).

In terms of domain architecture, 2Fe-2S ferredoxin-type spans 3 to 108 (AKVRVIFRAA…GLTLELPKAQ (106 aa)). The [2Fe-2S] cluster site is built by C43, C49, C52, and C89.

This sequence belongs to the adrenodoxin/putidaredoxin family. As to quaternary structure, monomer. Carbazole 1,9a-dioxygenase complex consists of a terminal oxygenase component CarAa, a ferredoxin reductase component fdr and a ferredoxin component CarAc. Requires [2Fe-2S] cluster as cofactor.

Part of the multicomponent carbazole 1,9a-dioxygenase (CARDO), that converts carbazole (CAR) into 2-aminobiphenyl-2,3-diol. Acts as a mediator in the electron transfer from fdr to CarAa. In Sphingomonas sp, this protein is Ferredoxin CarAc (carAc).